The primary structure comprises 131 residues: MVQLNGSYKLEKSDNFDAFLKELGVNFVTRNLAKSASPTVEVIVDGDSYTIKTSSTLKNSEIKFKLGEEFEEDRADGKKVQTSVTKEGDNKLVQVQKGDKPVTIVREFSEEGLTVTATVNGVTSVRFYKRQ.

Residues R106 and 126–128 (RFY) contribute to the (5Z,8Z,11Z,14Z)-eicosatetraenoate site. (9Z)-octadecenoate contacts are provided by residues R106 and 126–128 (RFY).

The protein belongs to the calycin superfamily. Fatty-acid binding protein (FABP) family.

Its subcellular location is the cytoplasm. Its function is as follows. FABPs are thought to play a role in the intracellular transport of long-chain fatty acids and their acyl-CoA esters. This Tyrophagus putrescentiae (Mold mite) protein is Fatty acid-binding protein.